A 642-amino-acid polypeptide reads, in one-letter code: Chaperone protein HtpG (642 aa).

The segment at 1 to 349 (MSAATETEVR…SADLPLNVSR (349 aa)) is a; substrate-binding. The interval 216-238 (ELPPAPPAKEGEEPEPPKTPEWE) is disordered. Positions 224-236 (KEGEEPEPPKTPE) are enriched in basic and acidic residues. Positions 350-570 (EILQQNRQVE…AHDMSATLER (221 aa)) are b. Positions 571–642 (LLKEAGQEVP…VKRLNKLLMG (72 aa)) are c.

Belongs to the heat shock protein 90 family. As to quaternary structure, homodimer.

The protein resides in the cytoplasm. Functionally, molecular chaperone. Has ATPase activity. This is Chaperone protein HtpG from Magnetococcus marinus (strain ATCC BAA-1437 / JCM 17883 / MC-1).